We begin with the raw amino-acid sequence, 119 residues long: Large ribosomal subunit protein bL19 (119 aa).

The protein belongs to the bacterial ribosomal protein bL19 family.

This protein is located at the 30S-50S ribosomal subunit interface and may play a role in the structure and function of the aminoacyl-tRNA binding site. The polypeptide is Large ribosomal subunit protein bL19 (rplS) (Mycoplasma pneumoniae (strain ATCC 29342 / M129 / Subtype 1) (Mycoplasmoides pneumoniae)).